We begin with the raw amino-acid sequence, 104 residues long: Large ribosomal subunit protein eL30 (104 aa).

The protein belongs to the eukaryotic ribosomal protein eL30 family.

This Sulfolobus acidocaldarius (strain ATCC 33909 / DSM 639 / JCM 8929 / NBRC 15157 / NCIMB 11770) protein is Large ribosomal subunit protein eL30 (rpl30e).